Here is a 194-residue protein sequence, read N- to C-terminus: Histone H1.0 (194 aa).

Met-1 is subject to N-acetylmethionine. Residues 1–11 show a composition bias toward low complexity; that stretch reads MTENSTSAPAA. The disordered stretch occupies residues 1–29; the sequence is MTENSTSAPAAKPKRAKASKKSTDHPKYS. An N-acetylthreonine; in Histone H1.0, N-terminally processed modification is found at Thr-2. Residues 24 to 97 enclose the H15 domain; it reads DHPKYSDMVV…GASGSFRLAK (74 aa). At Arg-42 the chain carries Citrulline. The interval 84-194 is disordered; the sequence is TKGVGASGSF…SSAKRAGKKK (111 aa). Ser-104 bears the ADP-ribosylserine mark. The span at 105–194 shows a compositional bias: basic residues; the sequence is VAFKKTKKEI…SSAKRAGKKK (90 aa).

The protein belongs to the histone H1/H5 family. In terms of processing, ADP-ribosylated on Ser-104 in response to DNA damage.

The protein localises to the nucleus. Its subcellular location is the chromosome. Histones H1 are necessary for the condensation of nucleosome chains into higher-order structures. The histones H1.0 are found in cells that are in terminal stages of differentiation or that have low rates of cell division. In Pongo abelii (Sumatran orangutan), this protein is Histone H1.0 (H1-0).